Here is a 319-residue protein sequence, read N- to C-terminus: Formimidoylglutamase (319 aa).

Positions 127, 150, 152, 154, 242, and 244 each coordinate Mn(2+).

It belongs to the arginase family. It depends on Mn(2+) as a cofactor.

It carries out the reaction N-formimidoyl-L-glutamate + H2O = formamide + L-glutamate. It functions in the pathway amino-acid degradation; L-histidine degradation into L-glutamate; L-glutamate from N-formimidoyl-L-glutamate (hydrolase route): step 1/1. Catalyzes the conversion of N-formimidoyl-L-glutamate to L-glutamate and formamide. This is Formimidoylglutamase from Halalkalibacterium halodurans (strain ATCC BAA-125 / DSM 18197 / FERM 7344 / JCM 9153 / C-125) (Bacillus halodurans).